Consider the following 372-residue polypeptide: Glutamate 5-kinase (372 aa).

K14 provides a ligand contact to ATP. Substrate is bound by residues S54, D141, and N153. ATP is bound at residue 173 to 174 (TD). The PUA domain occupies 280–358 (RGHVVIDAGA…GEIETVLGYM (79 aa)).

Belongs to the glutamate 5-kinase family.

The protein resides in the cytoplasm. It carries out the reaction L-glutamate + ATP = L-glutamyl 5-phosphate + ADP. The protein operates within amino-acid biosynthesis; L-proline biosynthesis; L-glutamate 5-semialdehyde from L-glutamate: step 1/2. Its function is as follows. Catalyzes the transfer of a phosphate group to glutamate to form L-glutamate 5-phosphate. In Burkholderia orbicola (strain AU 1054), this protein is Glutamate 5-kinase.